Consider the following 444-residue polypeptide: UDP-N-acetylglucosamine 1-carboxyvinyltransferase (444 aa).

Phosphoenolpyruvate is bound at residue 22-23 (KN). A UDP-N-acetyl-alpha-D-glucosamine-binding site is contributed by Arg94. Asp119 functions as the Proton donor in the catalytic mechanism. Residues Asp309 and Val331 each coordinate UDP-N-acetyl-alpha-D-glucosamine.

The protein belongs to the EPSP synthase family. MurA subfamily.

It is found in the cytoplasm. It catalyses the reaction phosphoenolpyruvate + UDP-N-acetyl-alpha-D-glucosamine = UDP-N-acetyl-3-O-(1-carboxyvinyl)-alpha-D-glucosamine + phosphate. It functions in the pathway cell wall biogenesis; peptidoglycan biosynthesis. Its function is as follows. Cell wall formation. Adds enolpyruvyl to UDP-N-acetylglucosamine. This is UDP-N-acetylglucosamine 1-carboxyvinyltransferase from Chlamydia abortus (strain DSM 27085 / S26/3) (Chlamydophila abortus).